Reading from the N-terminus, the 211-residue chain is Secreted phosphoprotein 24 (211 aa).

Positions 1–29 (MISRMEKMTMMMKILIMFALGMNYWSCSG) are cleaved as a signal peptide. 2 disulfides stabilise this stretch: Cys92–Cys103 and Cys116–Cys134. Ser96 carries the phosphoserine modification. Phosphoserine is present on residues Ser145, Ser146, Ser170, Ser173, and Ser182.

This sequence belongs to the SPP2 family. Post-translationally, phosphorylation sites are present in the extracellular medium. In terms of tissue distribution, detected in liver and plasma.

Its subcellular location is the secreted. Could coordinate an aspect of bone turnover. The protein is Secreted phosphoprotein 24 (SPP2) of Homo sapiens (Human).